We begin with the raw amino-acid sequence, 542 residues long: CTP synthase (542 aa).

An amidoligase domain region spans residues 1–266 (MATNYIFVTG…DDFICQRFHL (266 aa)). Ser14 lines the CTP pocket. Ser14 is a binding site for UTP. Residues 15 to 20 (SLGKGI) and Asp72 contribute to the ATP site. Asp72 and Glu140 together coordinate Mg(2+). Residues 147-149 (DIE), 187-192 (KTKPTQ), and Lys223 contribute to the CTP site. Residues 187 to 192 (KTKPTQ) and Lys223 each bind UTP. Residue 239–241 (KDV) participates in ATP binding. The region spanning 291-542 (VIGMVGKYTE…VKAAKDNQKK (252 aa)) is the Glutamine amidotransferase type-1 domain. Position 352 (Gly352) interacts with L-glutamine. Cys379 serves as the catalytic Nucleophile; for glutamine hydrolysis. Residues 380 to 383 (LGMQ), Glu403, and Arg470 contribute to the L-glutamine site. Catalysis depends on residues His515 and Glu517.

The protein belongs to the CTP synthase family. In terms of assembly, homotetramer.

It carries out the reaction UTP + L-glutamine + ATP + H2O = CTP + L-glutamate + ADP + phosphate + 2 H(+). The catalysed reaction is L-glutamine + H2O = L-glutamate + NH4(+). It catalyses the reaction UTP + NH4(+) + ATP = CTP + ADP + phosphate + 2 H(+). Its pathway is pyrimidine metabolism; CTP biosynthesis via de novo pathway; CTP from UDP: step 2/2. Its activity is regulated as follows. Allosterically activated by GTP, when glutamine is the substrate; GTP has no effect on the reaction when ammonia is the substrate. The allosteric effector GTP functions by stabilizing the protein conformation that binds the tetrahedral intermediate(s) formed during glutamine hydrolysis. Inhibited by the product CTP, via allosteric rather than competitive inhibition. Functionally, catalyzes the ATP-dependent amination of UTP to CTP with either L-glutamine or ammonia as the source of nitrogen. Regulates intracellular CTP levels through interactions with the four ribonucleotide triphosphates. This Pasteurella multocida (strain Pm70) protein is CTP synthase.